The primary structure comprises 54 residues: uncharacterized protein (54 aa).

Positions 13–54 (VAGDSGGNPENISIGTTSGAVVNKGPEQIPKKKKEESKEKEE) are disordered. Residues 20 to 32 (NPENISIGTTSGA) show a composition bias toward polar residues. Over residues 41–54 (IPKKKKEESKEKEE) the composition is skewed to basic and acidic residues.

This is an uncharacterized protein from Enterobacteria phage T4 (Bacteriophage T4).